Reading from the N-terminus, the 375-residue chain is DNA replication and repair protein RecF (375 aa).

30–37 (GENAQGKT) provides a ligand contact to ATP.

Belongs to the RecF family.

Its subcellular location is the cytoplasm. In terms of biological role, the RecF protein is involved in DNA metabolism; it is required for DNA replication and normal SOS inducibility. RecF binds preferentially to single-stranded, linear DNA. It also seems to bind ATP. The protein is DNA replication and repair protein RecF of Bacillus cereus (strain B4264).